The sequence spans 652 residues: uncharacterized protein (652 aa).

Positions 1-13 (MSVTESKAKTERK) are enriched in basic and acidic residues. The tract at residues 1–21 (MSVTESKAKTERKSSRKPAKT) is disordered.

Belongs to the ParB family.

This is an uncharacterized protein from Escherichia coli (strain K12).